The chain runs to 266 residues: Putative carbamate hydrolase RutD (266 aa).

Residues 14–116 (PVVVLISGLG…VLVSVNGWLR (103 aa)) enclose the AB hydrolase-1 domain.

It belongs to the AB hydrolase superfamily. Hydrolase RutD family.

The enzyme catalyses carbamate + 2 H(+) = NH4(+) + CO2. Functionally, involved in pyrimidine catabolism. May facilitate the hydrolysis of carbamate, a reaction that can also occur spontaneously. The sequence is that of Putative carbamate hydrolase RutD from Escherichia coli O81 (strain ED1a).